A 693-amino-acid polypeptide reads, in one-letter code: Golgin subfamily A member 6D (693 aa).

Positions 14-611 (LEESRQNKLA…KLLELQELVL (598 aa)) form a coiled coil. Disordered stretches follow at residues 20-70 (NKLA…GDSQ), 497-547 (LPGE…GTEQ), and 662-693 (VEPAPGVAREGSPHNNPTVQQIVQLSPVMQDT). Residues 537–547 (LPKEKADGTEQ) show a composition bias toward basic and acidic residues. Polar residues predominate over residues 674–693 (PHNNPTVQQIVQLSPVMQDT).

The protein belongs to the GOLGA6 family.

In Homo sapiens (Human), this protein is Golgin subfamily A member 6D (GOLGA6D).